The primary structure comprises 402 residues: Prostaglandin E2 receptor EP1 subtype (402 aa).

At methionine 1 to serine 35 the chain is on the extracellular side. N-linked (GlcNAc...) asparagine glycosylation is found at asparagine 8 and asparagine 25. Residues proline 36–glycine 62 form a helical membrane-spanning segment. Over arginine 63–threonine 72 the chain is Cytoplasmic. A helical transmembrane segment spans residues phenylalanine 73–leucine 96. At arginine 97–histidine 111 the chain is on the extracellular side. A disulfide bridge connects residues cysteine 110 and cysteine 188. Residues phenylalanine 112 to valine 133 form a helical membrane-spanning segment. Over glutamate 134 to arginine 155 the chain is Cytoplasmic. The helical transmembrane segment at leucine 156 to glycine 177 threads the bilayer. Over arginine 178–alanine 201 the chain is Extracellular. The chain crosses the membrane as a helical span at residues leucine 202–leucine 227. Residues alanine 228–glutamate 294 are Cytoplasmic-facing. The tract at residues serine 238–alanine 266 is disordered. A helical membrane pass occupies residues methionine 295–valine 321. The Extracellular portion of the chain corresponds to glycine 322–proline 332. A helical membrane pass occupies residues leucine 333–leucine 354. At arginine 355–phenylalanine 402 the chain is on the cytoplasmic side.

This sequence belongs to the G-protein coupled receptor 1 family. In terms of processing, phosphorylated. Abundant in kidney. Lower level expression in lung, skeletal muscle and spleen, lowest expression in testis and not detected in liver brain and heart.

It is found in the cell membrane. In terms of biological role, receptor for prostaglandin E2 (PGE2). The activity of this receptor is mediated by G(q) proteins which activate a phosphatidylinositol-calcium second messenger system. May play a role as an important modulator of renal function. Implicated the smooth muscle contractile response to PGE2 in various tissues. The chain is Prostaglandin E2 receptor EP1 subtype (PTGER1) from Homo sapiens (Human).